We begin with the raw amino-acid sequence, 118 residues long: Large ribosomal subunit protein bL17 (118 aa).

Belongs to the bacterial ribosomal protein bL17 family. Part of the 50S ribosomal subunit. Contacts protein L32.

The polypeptide is Large ribosomal subunit protein bL17 (Gemmatimonas aurantiaca (strain DSM 14586 / JCM 11422 / NBRC 100505 / T-27)).